The chain runs to 450 residues: UDP-N-acetylmuramoylalanine--D-glutamate ligase (450 aa).

112 to 118 (GSNGKTT) is an ATP binding site.

This sequence belongs to the MurCDEF family.

It is found in the cytoplasm. The enzyme catalyses UDP-N-acetyl-alpha-D-muramoyl-L-alanine + D-glutamate + ATP = UDP-N-acetyl-alpha-D-muramoyl-L-alanyl-D-glutamate + ADP + phosphate + H(+). It functions in the pathway cell wall biogenesis; peptidoglycan biosynthesis. Cell wall formation. Catalyzes the addition of glutamate to the nucleotide precursor UDP-N-acetylmuramoyl-L-alanine (UMA). The protein is UDP-N-acetylmuramoylalanine--D-glutamate ligase of Cytophaga hutchinsonii (strain ATCC 33406 / DSM 1761 / CIP 103989 / NBRC 15051 / NCIMB 9469 / D465).